The chain runs to 577 residues: Torulene dioxygenase (577 aa).

Fe(2+)-binding residues include histidine 239, histidine 291, histidine 361, and histidine 570.

It belongs to the carotenoid oxygenase family. Requires Fe(2+) as cofactor.

The protein resides in the cytoplasm. It is found in the cytosol. It catalyses the reaction torulene + O2 = 4'-apo-beta-carotenal + 3-methyl-2-butenal. It participates in carotenoid biosynthesis. In terms of biological role, torulene dioxygenase; part of the pathway that mediates the biosynthesis of neurosporaxanthin, a carboxylic apocarotenoid acting as an essential protective pigments and leading to orange pigmentation. CarT mediates the cleavage of torulene into beta-apo-4'-carotenal, the aldehyde corresponding to the acidic neurosporaxanthin. Is also active on other monocyclic synthetic substrates such as beta-apo-8'-carotenal and beta-apo-10'-carotenal to produce beta-apo-14'-carotenal and retinal(beta-apo-15'-carotenal), respectively. Neurosporaxanthin is synthesized from geranyl-geranyl pyrophosphate (GGPP) through several enzymatic activities. Phytoene synthase activity performed by the bifunctional enzyme carAR first produces phytoene from geranyl-geranyl pyrophosphate (GGPP). The phytoene dehydrogenase carB then introduces 4 desaturations to lead to lycopene which is substrate of the carotene cyclase activity of carAR that leads to the production of gamma-carotene. CarB then performs a 5th desaturation reaction to yield torulene. Torulene is the substrate of the dioxidase carT that breaks the molecule, removing five carbon atoms to yield beta-apo-4'-carotenal, whereas the aldehyde dehydrogenase carD mediates the last step by converting beta-apo-4'-carotenal into neurosporaxanthin. The polypeptide is Torulene dioxygenase (Fusarium fujikuroi (Bakanae and foot rot disease fungus)).